The sequence spans 529 residues: Methionine--tRNA ligase (529 aa).

The 'HIGH' region motif lies at 12 to 22; that stretch reads YYVNALPHIGS. Zn(2+) is bound by residues cysteine 127, cysteine 130, cysteine 145, and histidine 148. A 'KMSKS' region motif is present at residues 301 to 305; that stretch reads KMGKS. Lysine 304 contacts ATP.

Belongs to the class-I aminoacyl-tRNA synthetase family. MetG type 2A subfamily. As to quaternary structure, monomer. Requires Zn(2+) as cofactor.

The protein localises to the cytoplasm. The catalysed reaction is tRNA(Met) + L-methionine + ATP = L-methionyl-tRNA(Met) + AMP + diphosphate. Functionally, is required not only for elongation of protein synthesis but also for the initiation of all mRNA translation through initiator tRNA(fMet) aminoacylation. This chain is Methionine--tRNA ligase, found in Thermosynechococcus vestitus (strain NIES-2133 / IAM M-273 / BP-1).